The sequence spans 858 residues: Translation initiation factor IF-2 (858 aa).

The disordered stretch occupies residues 49–271 (TTTVTHPKSQ…NKPAPVRKDK (223 aa)). Residues 80–226 (NQQQSNSRHQ…RFGGSLNSNN (147 aa)) show a composition bias toward low complexity. The span at 239-256 (NRRRNNRNNKSRNNKNQR) shows a compositional bias: basic residues. The tr-type G domain maps to 359–528 (PRAPVVTVMG…LLQSEVLELT (170 aa)). Residues 368–375 (GHVDHGKT) are G1. A GTP-binding site is contributed by 368-375 (GHVDHGKT). Residues 393 to 397 (GITQA) are G2. Residues 414–417 (DTPG) are G3. GTP is bound by residues 414 to 418 (DTPGH) and 468 to 471 (NKID). Positions 468–471 (NKID) are G4. The segment at 504-506 (SAK) is G5.

This sequence belongs to the TRAFAC class translation factor GTPase superfamily. Classic translation factor GTPase family. IF-2 subfamily.

Its subcellular location is the cytoplasm. One of the essential components for the initiation of protein synthesis. Protects formylmethionyl-tRNA from spontaneous hydrolysis and promotes its binding to the 30S ribosomal subunits. Also involved in the hydrolysis of GTP during the formation of the 70S ribosomal complex. The protein is Translation initiation factor IF-2 of Lactiplantibacillus plantarum (strain ATCC BAA-793 / NCIMB 8826 / WCFS1) (Lactobacillus plantarum).